A 532-amino-acid polypeptide reads, in one-letter code: Phosphoenolpyruvate carboxykinase (ATP) (532 aa).

Substrate contacts are provided by Arg60, Tyr194, and Lys200. ATP contacts are provided by residues Lys200, His219, and 237 to 245 (GLSGTGKTT). 2 residues coordinate Mn(2+): Lys200 and His219. Asp258 is a Mn(2+) binding site. Residues Glu286, Arg324, and Thr449 each contribute to the ATP site. Arg324 contacts substrate.

This sequence belongs to the phosphoenolpyruvate carboxykinase (ATP) family. Requires Mn(2+) as cofactor.

The protein resides in the cytoplasm. The catalysed reaction is oxaloacetate + ATP = phosphoenolpyruvate + ADP + CO2. The protein operates within carbohydrate biosynthesis; gluconeogenesis. Involved in the gluconeogenesis. Catalyzes the conversion of oxaloacetate (OAA) to phosphoenolpyruvate (PEP) through direct phosphoryl transfer between the nucleoside triphosphate and OAA. The protein is Phosphoenolpyruvate carboxykinase (ATP) of Ruegeria sp. (strain TM1040) (Silicibacter sp.).